Reading from the N-terminus, the 879-residue chain is Metabotropic glutamate receptor 3 (879 aa).

Positions methionine 1–serine 22 are cleaved as a signal peptide. Residues leucine 23–tryptophan 576 lie on the Extracellular side of the membrane. Cysteine 57 and cysteine 99 are disulfide-bonded. L-glutamate contacts are provided by residues serine 151 and alanine 172 to threonine 174. An N-linked (GlcNAc...) asparagine glycan is attached at asparagine 209. Tyrosine 222 contacts L-glutamate. 7 disulfide bridges follow: cysteine 240–cysteine 527, cysteine 361–cysteine 373, cysteine 412–cysteine 419, cysteine 509–cysteine 528, cysteine 513–cysteine 531, cysteine 534–cysteine 546, and cysteine 549–cysteine 562. Asparagine 292 carries an N-linked (GlcNAc...) asparagine glycan. Aspartate 301 contributes to the L-glutamate binding site. Lysine 389 is an L-glutamate binding site. Asparagine 414 and asparagine 439 each carry an N-linked (GlcNAc...) asparagine glycan. Residues alanine 577–isoleucine 599 traverse the membrane as a helical segment. Residues lysine 600 to glutamate 613 lie on the Cytoplasmic side of the membrane. Residues leucine 614–alanine 634 form a helical membrane-spanning segment. At lysine 635–arginine 645 the chain is on the extracellular side. The helical transmembrane segment at leucine 646–asparagine 664 threads the bilayer. Residues cysteine 665–glutamine 688 lie on the Cytoplasmic side of the membrane. A helical transmembrane segment spans residues valine 689–leucine 709. Residues glutamate 710–aspartate 734 lie on the Extracellular side of the membrane. The chain crosses the membrane as a helical span at residues serine 735 to phenylalanine 756. Residues lysine 757–lysine 769 lie on the Cytoplasmic side of the membrane. Residues phenylalanine 770 to threonine 792 form a helical membrane-spanning segment. The Extracellular portion of the chain corresponds to serine 793–threonine 802. A helical membrane pass occupies residues methionine 803–phenylalanine 828. At glutamine 829 to leucine 879 the chain is on the cytoplasmic side.

The protein belongs to the G-protein coupled receptor 3 family. In terms of assembly, interacts with TAMALIN. Detected in brain cortex, thalamus, subthalamic nucleus, substantia nigra, hypothalamus, hippocampus, corpus callosum, caudate nucleus and amygdala.

The protein resides in the cell membrane. In terms of biological role, G-protein coupled receptor for glutamate. Ligand binding causes a conformation change that triggers signaling via guanine nucleotide-binding proteins (G proteins) and modulates the activity of down-stream effectors. Signaling inhibits adenylate cyclase activity. The chain is Metabotropic glutamate receptor 3 (GRM3) from Homo sapiens (Human).